We begin with the raw amino-acid sequence, 426 residues long: Probable imidazolonepropionase (426 aa).

Positions 159 and 192 each coordinate 4-imidazolone-5-propanoate. Residue tyrosine 159 participates in N-formimidoyl-L-glutamate binding. Histidine 260 is a Fe(3+) binding site. Residue histidine 260 coordinates Zn(2+). Glutamate 263 lines the 4-imidazolone-5-propanoate pocket. Position 334 (aspartate 334) interacts with Fe(3+). Aspartate 334 lines the Zn(2+) pocket. Asparagine 336 lines the N-formimidoyl-L-glutamate pocket.

The protein belongs to the metallo-dependent hydrolases superfamily. HutI family. It depends on Zn(2+) as a cofactor. Fe(3+) is required as a cofactor.

The catalysed reaction is 4-imidazolone-5-propanoate + H2O = N-formimidoyl-L-glutamate. The protein operates within amino-acid degradation; L-histidine degradation into L-glutamate; N-formimidoyl-L-glutamate from L-histidine: step 3/3. The polypeptide is Probable imidazolonepropionase (AMDHD1) (Homo sapiens (Human)).